The following is a 120-amino-acid chain: U13-lycotoxin-Ls1f (120 aa).

A signal peptide spans 1-16; sequence MKILFVLISILYAVYC. The propeptide occupies 17–54; sequence FSSEEDVDSAYLANELEPVEDINSEQYAALEPKEEQER. 4 disulfide bridges follow: cysteine 56/cysteine 70, cysteine 63/cysteine 76, cysteine 69/cysteine 87, and cysteine 78/cysteine 85. Residues 56-95 form the Agouti domain; it reads CAGMGQDCKDDCDCCLNIATCNCWFGRYFCSCTFGDYQTC.

This sequence belongs to the neurotoxin 05 (agouti) family. In terms of processing, contains 6 disulfide bonds. In terms of tissue distribution, expressed by the venom gland.

The protein localises to the secreted. The polypeptide is U13-lycotoxin-Ls1f (Lycosa singoriensis (Wolf spider)).